The chain runs to 458 residues: Glycine--tRNA ligase (458 aa).

Substrate-binding residues include R97 and E171. Residues 203–205 (RNE), 213–218 (FRTREF), 287–288 (EL), and 331–334 (GADR) each bind ATP. Residue 218-222 (FEQME) participates in substrate binding. 327–331 (EPSLG) is a substrate binding site.

This sequence belongs to the class-II aminoacyl-tRNA synthetase family. Homodimer.

The protein localises to the cytoplasm. It carries out the reaction tRNA(Gly) + glycine + ATP = glycyl-tRNA(Gly) + AMP + diphosphate. In terms of biological role, catalyzes the attachment of glycine to tRNA(Gly). The sequence is that of Glycine--tRNA ligase from Bacillus thuringiensis subsp. konkukian (strain 97-27).